The primary structure comprises 507 residues: Phosphoprotein (507 aa).

The segment at 1–48 (MAEEQARHVKNGLECIRALKAEPIGSLAIEEAMAAWSEISDNPGQERA) is interaction with N0. Disordered regions lie at residues 41–99 (DNPG…PPRN), 134–163 (GLDG…TEGY), 201–231 (NNFP…IKKG), and 250–273 (GATQ…GNVP). Position 86 is a phosphoserine (Ser-86). A compositionally biased stretch (low complexity) spans 134–145 (GLDGDSTLSGGD). A compositionally biased stretch (acidic residues) spans 146 to 160 (NESENSDVDIGEPDT). Position 151 is a phosphoserine (Ser-151). The segment covering 260-270 (SEPSGPGAPAG) has biased composition (low complexity). Residues 304–376 (GDYYDDELFS…LSSIMIAIPG (73 aa)) form a multimerization region. 2 interaction with the L polymerase regions span residues 361 to 377 (STLE…IPGL) and 396 to 410 (PIIG…AEVL). The tract at residues 457–507 (GPASRSVIRSIIKSSRLEEDRKRYLMTLLDDIKGANDLAKFHQMLMKIIMK) is x domain (XD). Positions 459–507 (ASRSVIRSIIKSSRLEEDRKRYLMTLLDDIKGANDLAKFHQMLMKIIMK) are interaction with the nucleocapsid (N-RNA).

This sequence belongs to the morbillivirus P protein family. Homotetramer. Interacts (via multimerization domain and XD domain) with polymerase L; this interaction forms the polymerase L-P complex. Interacts (via N-terminus) with N0 (via Ncore); this interaction allows P to chaperon N0 to avoid N polymerization and non-specific RNA binding before encapsidation. Interacts (via C-terminus) with N-RNA template (via Ntail); this interaction maintains the P/L complex anchored to the nucleocapsid template during the sequential transcription. Interacts (via C-terminus) with protein C this interaction allows C to associate with the ribonucleocapsid. Phosphorylation on serines by host CK2 is necessary for the formation of viral factories.

Functionally, essential cofactor of the RNA polymerase L that plays a central role in the transcription and replication by forming the polymerase complex with RNA polymerase L and recruiting L to the genomic N-RNA template for RNA synthesis. Also plays a central role in the encapsidation of nascent RNA chains by forming the encapsidation complex with the nucleocapsid protein N (N-P complex). Acts as a chaperone for newly synthesized free N protein, so-called N0, allowing encapsidation of nascent RNA chains during replication. The nucleoprotein protein N prevents excessive phosphorylation of P, which leads to down-regulation of viral transcription/ replication. Participates, together with N, in the formation of viral factories (viroplasms), which are large inclusions in the host cytoplasm where replication takes place. This is Phosphoprotein (P/V) from Measles virus (strain Edmonston) (MeV).